Consider the following 578-residue polypeptide: DNA mismatch repair protein MutL (578 aa).

Belongs to the DNA mismatch repair MutL/HexB family.

Functionally, this protein is involved in the repair of mismatches in DNA. It is required for dam-dependent methyl-directed DNA mismatch repair. May act as a 'molecular matchmaker', a protein that promotes the formation of a stable complex between two or more DNA-binding proteins in an ATP-dependent manner without itself being part of a final effector complex. This chain is DNA mismatch repair protein MutL, found in Carboxydothermus hydrogenoformans (strain ATCC BAA-161 / DSM 6008 / Z-2901).